The chain runs to 236 residues: Endonuclease NucS (236 aa).

It belongs to the NucS endonuclease family.

It is found in the cytoplasm. Functionally, cleaves both 3' and 5' ssDNA extremities of branched DNA structures. The sequence is that of Endonuclease NucS from Saccharolobus solfataricus (strain ATCC 35092 / DSM 1617 / JCM 11322 / P2) (Sulfolobus solfataricus).